Here is a 350-residue protein sequence, read N- to C-terminus: ATPase GET3 (350 aa).

26–33 (KGGVGKTT) lines the ATP pocket. Aspartate 57 is an active-site residue. Glutamate 243 and asparagine 270 together coordinate ATP. Residues cysteine 282 and cysteine 285 each coordinate Zn(2+).

The protein belongs to the arsA ATPase family. As to quaternary structure, homodimer. Component of the Golgi to ER traffic (GET) complex, which is composed of GET1, GET2 and GET3. Within the complex, GET1 and GET2 form a heterotetramer which is stabilized by phosphatidylinositol binding and which binds to the GET3 homodimer. Interacts with the chloride channel protein GEF1.

It localises to the cytoplasm. It is found in the endoplasmic reticulum. The protein localises to the golgi apparatus. In terms of biological role, ATPase required for the post-translational delivery of tail-anchored (TA) proteins to the endoplasmic reticulum. Recognizes and selectively binds the transmembrane domain of TA proteins in the cytosol. This complex then targets to the endoplasmic reticulum by membrane-bound receptors GET1 and GET2, where the tail-anchored protein is released for insertion. This process is regulated by ATP binding and hydrolysis. ATP binding drives the homodimer towards the closed dimer state, facilitating recognition of newly synthesized TA membrane proteins. ATP hydrolysis is required for insertion. Subsequently, the homodimer reverts towards the open dimer state, lowering its affinity for the GET1-GET2 receptor, and returning it to the cytosol to initiate a new round of targeting. Cooperates with the HDEL receptor ERD2 to mediate the ATP-dependent retrieval of resident ER proteins that contain a C-terminal H-D-E-L retention signal from the Golgi to the ER. Involved in low-level resistance to the oxyanions arsenite and arsenate, and in heat tolerance. This is ATPase GET3 from Candida dubliniensis (strain CD36 / ATCC MYA-646 / CBS 7987 / NCPF 3949 / NRRL Y-17841) (Yeast).